The following is a 287-amino-acid chain: MPELPEVETVRQGLAQWVTGRRIAEVEVRHPRAIRRHPAGAAHFADVLVGTTVRDVRRRGKYLWLPLDSGDAVIGHLGMSGQLLLQPGAAPDEAHLRVRFRFADDGPELRFVDQRTFGGLSVSAGGAEMPTEIAHIARDPLDPEFSEAAFVAALRRRRTEVKRALLDQTLLSGVGNIYADEALWRARLHGARPADGLTGPAALRLLGHVRDVLGEAIKEGGTSFDALYVNVNGESGYFDRALNVYGRADQPCRRCGTPVRREAFMNRSSYSCPRCQPRPRRALQASG.

Residue P2 is the Schiff-base intermediate with DNA of the active site. The active-site Proton donor is the E3. Catalysis depends on K61, which acts as the Proton donor; for beta-elimination activity. 3 residues coordinate DNA: H95, R115, and R157. Residues 243-277 (NVYGRADQPCRRCGTPVRREAFMNRSSYSCPRCQP) form an FPG-type zinc finger. R267 serves as the catalytic Proton donor; for delta-elimination activity.

The protein belongs to the FPG family. In terms of assembly, monomer. Zn(2+) is required as a cofactor.

It carries out the reaction Hydrolysis of DNA containing ring-opened 7-methylguanine residues, releasing 2,6-diamino-4-hydroxy-5-(N-methyl)formamidopyrimidine.. It catalyses the reaction 2'-deoxyribonucleotide-(2'-deoxyribose 5'-phosphate)-2'-deoxyribonucleotide-DNA = a 3'-end 2'-deoxyribonucleotide-(2,3-dehydro-2,3-deoxyribose 5'-phosphate)-DNA + a 5'-end 5'-phospho-2'-deoxyribonucleoside-DNA + H(+). Its function is as follows. Involved in base excision repair of DNA damaged by oxidation or by mutagenic agents. Acts as a DNA glycosylase that recognizes and removes damaged bases. Has a preference for oxidized purines, such as 7,8-dihydro-8-oxoguanine (8-oxoG). Has AP (apurinic/apyrimidinic) lyase activity and introduces nicks in the DNA strand. Cleaves the DNA backbone by beta-delta elimination to generate a single-strand break at the site of the removed base with both 3'- and 5'-phosphates. The chain is Formamidopyrimidine-DNA glycosylase from Salinispora arenicola (strain CNS-205).